We begin with the raw amino-acid sequence, 529 residues long: Neuronal acetylcholine receptor subunit alpha-2 (529 aa).

Residues 1–26 (MGPSCPVFLSFTKLSLWWLLLTPAGG) form the signal peptide. Positions 27 to 56 (EEAKRPPPRAPGDPLSSPSPTALPQGGSHT) are disordered. Topologically, residues 27–264 (EEAKRPPPRA…VTYAFVIRRL (238 aa)) are extracellular. N-linked (GlcNAc...) asparagine glycans are attached at residues Asn-79 and Asn-129. Cysteines 183 and 197 form a disulfide. Residue Asn-235 is glycosylated (N-linked (GlcNAc...) asparagine). A disulfide bond links Cys-247 and Cys-248. The next 3 membrane-spanning stretches (helical) occupy residues 265–289 (PLFYTINLIIPCLLISCLTVLVFYL), 297–315 (ITLCISVLLSLTVFLLLIT), and 331–352 (YLLFTMIFVTLSIVITVFVLNV). At 353-502 (HHRSPSTHTM…WKYVAMVIDR (150 aa)) the chain is on the cytoplasmic side. A helical transmembrane segment spans residues 503-521 (IFLWLFIIVCFLGTIGLFL).

This sequence belongs to the ligand-gated ion channel (TC 1.A.9) family. Acetylcholine receptor (TC 1.A.9.1) subfamily. Alpha-2/CHRNA2 sub-subfamily. Neuronal AChR is composed of two different types of subunits: alpha and non-alpha (beta). CHRNA2/alpha-2 subunit can be combined to CHRNB2/beta-2 or CHRNB4/beta-4 to give rise to functional receptors. Both CHRNA2:CHRNB2 and CHRNA2:CHRNB4 nAChR complexes are heteropentamers with two subtypes: LS (low agonist sensitivity) with a (CHRNA2)3:(CHRNB2/4)2 and HS (high agonist sensitivity) with a (CHRNA2)2:(CHRNB2/4)3 stoichiometries; the subtypes differ in their subunit binding interfaces which are involved in ligand binding.

It is found in the synaptic cell membrane. Its subcellular location is the cell membrane. It carries out the reaction Ca(2+)(in) = Ca(2+)(out). The enzyme catalyses K(+)(in) = K(+)(out). It catalyses the reaction Na(+)(in) = Na(+)(out). In terms of biological role, component of neuronal acetylcholine receptors (nAChRs) that function as pentameric, ligand-gated cation channels with high calcium permeability among other activities. nAChRs are excitatory neurotrasnmitter receptors formed by a collection of nAChR subunits known to mediate synaptic transmission in the nervous system and the neuromuscular junction. Each nAchR subunit confers differential attributes to channel properties, including activation, deactivation and desensitization kinetics, pH sensitivity, cation permeability, and binding to allosteric modulators. CHRNA2 forms heteropentameric neuronal acetylcholine receptors with CHRNB2 and CHRNB4 and plays a role in nicotine dependence. In Homo sapiens (Human), this protein is Neuronal acetylcholine receptor subunit alpha-2.